The sequence spans 351 residues: Probable galacturonosyltransferase-like 4 (351 aa).

The Cytoplasmic segment spans residues 1 to 8 (MASRSLSY). Residues 9 to 29 (TQLLGLLSFILLLVTTTTMAV) form a helical; Signal-anchor for type II membrane protein membrane-spanning segment. Residues 30-351 (RVGVILHKPS…YRSSRHSLEE (322 aa)) are Lumenal-facing. Asn-96 and Asn-203 each carry an N-linked (GlcNAc...) asparagine glycan.

Belongs to the glycosyltransferase 8 family.

Its subcellular location is the golgi apparatus membrane. Its pathway is glycan metabolism; pectin biosynthesis. Functionally, may be involved in pectin and/or xylans biosynthesis in cell walls. This chain is Probable galacturonosyltransferase-like 4 (GATL4), found in Arabidopsis thaliana (Mouse-ear cress).